We begin with the raw amino-acid sequence, 364 residues long: GDP-fucose transporter 1 (364 aa).

8 helical membrane-spanning segments follow: residues 34–56 (FLLRALQIALVVSLYWVTSISMV), 76–98 (VTFYQCLVTTLLCKGLSALAACC), 111–130 (LRVARSVLPLSVVFIGMITF), 140–162 (VAFYNVGRSLTTVFNVLLSYLLL), 167–185 (SFYALLTCGIIIGGFWLGV), 195–214 (SWLGTVFGVLASLCVSLNAI), 227–249 (IWRLTFYNNVNACILFLPLLLLL), and 264–286 (AHFWGMMTLGGLFGFAIGYVTGL).

Belongs to the TPT transporter family. SLC35C subfamily.

Its subcellular location is the golgi apparatus membrane. It catalyses the reaction GMP(out) + GDP-beta-L-fucose(in) = GMP(in) + GDP-beta-L-fucose(out). Its function is as follows. Antiporter specific for GDP-l-fucose and depending on the concomitant reverse transport of GMP. Involved in GDP-fucose import from the cytoplasm into the Golgi lumen. In Homo sapiens (Human), this protein is GDP-fucose transporter 1.